The sequence spans 334 residues: Glycerol-3-phosphate dehydrogenase [NAD(P)+] 2 (334 aa).

Residues W16, R36, R37, and K110 each contribute to the NADPH site. Sn-glycerol 3-phosphate is bound by residues K110 and G140. An NADPH-binding site is contributed by A144. Residues K195, D248, S258, R259, and N260 each coordinate sn-glycerol 3-phosphate. The active-site Proton acceptor is the K195. R259 contributes to the NADPH binding site. Positions 282 and 284 each coordinate NADPH.

This sequence belongs to the NAD-dependent glycerol-3-phosphate dehydrogenase family.

The protein resides in the cytoplasm. The enzyme catalyses sn-glycerol 3-phosphate + NAD(+) = dihydroxyacetone phosphate + NADH + H(+). It catalyses the reaction sn-glycerol 3-phosphate + NADP(+) = dihydroxyacetone phosphate + NADPH + H(+). The protein operates within membrane lipid metabolism; glycerophospholipid metabolism. In terms of biological role, catalyzes the reduction of the glycolytic intermediate dihydroxyacetone phosphate (DHAP) to sn-glycerol 3-phosphate (G3P), the key precursor for phospholipid synthesis. This is Glycerol-3-phosphate dehydrogenase [NAD(P)+] 2 from Mycobacterium tuberculosis (strain ATCC 25618 / H37Rv).